The following is a 319-amino-acid chain: Ribosomal RNA small subunit methyltransferase H (319 aa).

Residues 35-37 (AGH), D55, F84, D104, and Q111 contribute to the S-adenosyl-L-methionine site.

It belongs to the methyltransferase superfamily. RsmH family.

The protein localises to the cytoplasm. It carries out the reaction cytidine(1402) in 16S rRNA + S-adenosyl-L-methionine = N(4)-methylcytidine(1402) in 16S rRNA + S-adenosyl-L-homocysteine + H(+). Functionally, specifically methylates the N4 position of cytidine in position 1402 (C1402) of 16S rRNA. This is Ribosomal RNA small subunit methyltransferase H from Enterococcus hirae.